A 195-amino-acid polypeptide reads, in one-letter code: NADH-quinone oxidoreductase subunit B (195 aa).

Residues Cys-74, Cys-75, Cys-139, and Cys-169 each contribute to the [4Fe-4S] cluster site.

The protein belongs to the complex I 20 kDa subunit family. In terms of assembly, NDH-1 is composed of 14 different subunits. Subunits NuoB, C, D, E, F, and G constitute the peripheral sector of the complex. [4Fe-4S] cluster is required as a cofactor.

It localises to the cell inner membrane. It carries out the reaction a quinone + NADH + 5 H(+)(in) = a quinol + NAD(+) + 4 H(+)(out). NDH-1 shuttles electrons from NADH, via FMN and iron-sulfur (Fe-S) centers, to quinones in the respiratory chain. The immediate electron acceptor for the enzyme in this species is believed to be ubiquinone. Couples the redox reaction to proton translocation (for every two electrons transferred, four hydrogen ions are translocated across the cytoplasmic membrane), and thus conserves the redox energy in a proton gradient. This Methylobacterium sp. (strain 4-46) protein is NADH-quinone oxidoreductase subunit B.